The chain runs to 316 residues: 4-hydroxy-3-methylbut-2-enyl diphosphate reductase (316 aa).

A [4Fe-4S] cluster-binding site is contributed by Cys-12. 2 residues coordinate (2E)-4-hydroxy-3-methylbut-2-enyl diphosphate: His-41 and His-74. Residues His-41 and His-74 each contribute to the dimethylallyl diphosphate site. 2 residues coordinate isopentenyl diphosphate: His-41 and His-74. Cys-96 is a binding site for [4Fe-4S] cluster. His-124 contributes to the (2E)-4-hydroxy-3-methylbut-2-enyl diphosphate binding site. His-124 provides a ligand contact to dimethylallyl diphosphate. An isopentenyl diphosphate-binding site is contributed by His-124. The Proton donor role is filled by Glu-126. Residue Thr-169 coordinates (2E)-4-hydroxy-3-methylbut-2-enyl diphosphate. Cys-199 contributes to the [4Fe-4S] cluster binding site. Ser-227, Ser-228, Asn-229, and Ser-271 together coordinate (2E)-4-hydroxy-3-methylbut-2-enyl diphosphate. 4 residues coordinate dimethylallyl diphosphate: Ser-227, Ser-228, Asn-229, and Ser-271. 4 residues coordinate isopentenyl diphosphate: Ser-227, Ser-228, Asn-229, and Ser-271.

Belongs to the IspH family. It depends on [4Fe-4S] cluster as a cofactor.

The enzyme catalyses isopentenyl diphosphate + 2 oxidized [2Fe-2S]-[ferredoxin] + H2O = (2E)-4-hydroxy-3-methylbut-2-enyl diphosphate + 2 reduced [2Fe-2S]-[ferredoxin] + 2 H(+). It catalyses the reaction dimethylallyl diphosphate + 2 oxidized [2Fe-2S]-[ferredoxin] + H2O = (2E)-4-hydroxy-3-methylbut-2-enyl diphosphate + 2 reduced [2Fe-2S]-[ferredoxin] + 2 H(+). The protein operates within isoprenoid biosynthesis; dimethylallyl diphosphate biosynthesis; dimethylallyl diphosphate from (2E)-4-hydroxy-3-methylbutenyl diphosphate: step 1/1. It participates in isoprenoid biosynthesis; isopentenyl diphosphate biosynthesis via DXP pathway; isopentenyl diphosphate from 1-deoxy-D-xylulose 5-phosphate: step 6/6. Functionally, catalyzes the conversion of 1-hydroxy-2-methyl-2-(E)-butenyl 4-diphosphate (HMBPP) into a mixture of isopentenyl diphosphate (IPP) and dimethylallyl diphosphate (DMAPP). Acts in the terminal step of the DOXP/MEP pathway for isoprenoid precursor biosynthesis. This chain is 4-hydroxy-3-methylbut-2-enyl diphosphate reductase, found in Xylella fastidiosa (strain M23).